We begin with the raw amino-acid sequence, 353 residues long: Photosystem II protein D1 (353 aa).

T2 carries the N-acetylthreonine modification. Position 2 is a phosphothreonine (T2). 3 consecutive transmembrane segments (helical) span residues 29-46, 118-133, and 142-156; these read YIGW…TATS, HFFI…EWEL, and WIAV…AATA. H118 lines the chlorophyll a pocket. Y126 is a binding site for pheophytin a. 2 residues coordinate [CaMn4O5] cluster: D170 and E189. A helical transmembrane segment spans residues 197 to 218; the sequence is FHMLGVAGVFGGSLFSAMHGSL. A chlorophyll a-binding site is contributed by H198. Residues H215 and 264–265 contribute to the a quinone site; that span reads SF. A Fe cation-binding site is contributed by H215. H272 is a binding site for Fe cation. A helical membrane pass occupies residues 274–288; the sequence is FLAIWPVVGIWFTAL. H332, E333, D342, and A344 together coordinate [CaMn4O5] cluster. Positions 345–353 are excised as a propeptide; that stretch reads SVEAPSING.

The protein belongs to the reaction center PufL/M/PsbA/D family. As to quaternary structure, PSII is composed of 1 copy each of membrane proteins PsbA, PsbB, PsbC, PsbD, PsbE, PsbF, PsbH, PsbI, PsbJ, PsbK, PsbL, PsbM, PsbT, PsbX, PsbY, PsbZ, Psb30/Ycf12, at least 3 peripheral proteins of the oxygen-evolving complex and a large number of cofactors. It forms dimeric complexes. Requires The D1/D2 heterodimer binds P680, chlorophylls that are the primary electron donor of PSII, and subsequent electron acceptors. It shares a non-heme iron and each subunit binds pheophytin, quinone, additional chlorophylls, carotenoids and lipids. D1 provides most of the ligands for the Mn4-Ca-O5 cluster of the oxygen-evolving complex (OEC). There is also a Cl(-1) ion associated with D1 and D2, which is required for oxygen evolution. The PSII complex binds additional chlorophylls, carotenoids and specific lipids. as cofactor. In terms of processing, tyr-161 forms a radical intermediate that is referred to as redox-active TyrZ, YZ or Y-Z. C-terminally processed by CTPA; processing is essential to allow assembly of the oxygen-evolving complex and thus photosynthetic growth.

Its subcellular location is the plastid. The protein localises to the chloroplast thylakoid membrane. The catalysed reaction is 2 a plastoquinone + 4 hnu + 2 H2O = 2 a plastoquinol + O2. Its function is as follows. Photosystem II (PSII) is a light-driven water:plastoquinone oxidoreductase that uses light energy to abstract electrons from H(2)O, generating O(2) and a proton gradient subsequently used for ATP formation. It consists of a core antenna complex that captures photons, and an electron transfer chain that converts photonic excitation into a charge separation. The D1/D2 (PsbA/PsbD) reaction center heterodimer binds P680, the primary electron donor of PSII as well as several subsequent electron acceptors. In Stigeoclonium helveticum (Green alga), this protein is Photosystem II protein D1.